A 1113-amino-acid polypeptide reads, in one-letter code: Translation initiation factor IF-2 (1113 aa).

4 stretches are compositionally biased toward polar residues: residues 56 to 72, 129 to 139, 162 to 187, and 194 to 205; these read QSNQ…SSKE, KANTSNQSKGV, LENN…TQLV, and TKNNEPPQQKTS. Disordered stretches follow at residues 56–446 and 470–504; these read QSNQ…IGEN and LARP…RQRR. Low complexity predominate over residues 248–265; the sequence is PVQPRTQNNQNRQRIPNK. Residues 415 to 429 show a composition bias toward basic and acidic residues; sequence RRSDWDDAAKLEALR. 2 stretches are compositionally biased toward basic residues: residues 474–483 and 490–504; these read AKPKSTKKSN and TRKR…RQRR. Positions 605–777 constitute a tr-type G domain; sequence RRPPVVTVMG…VLLVTEVEDL (173 aa). Positions 614 to 621 are G1; the sequence is GHVDHGKT. A GTP-binding site is contributed by 614–621; it reads GHVDHGKT. The interval 639 to 643 is G2; sequence GITQH. The tract at residues 664-667 is G3; the sequence is DTPG. GTP contacts are provided by residues 664 to 668 and 718 to 721; these read DTPGH and NKID. The interval 718–721 is G4; sequence NKID. The G5 stretch occupies residues 754 to 756; that stretch reads SAI.

Belongs to the TRAFAC class translation factor GTPase superfamily. Classic translation factor GTPase family. IF-2 subfamily.

It is found in the cytoplasm. One of the essential components for the initiation of protein synthesis. Protects formylmethionyl-tRNA from spontaneous hydrolysis and promotes its binding to the 30S ribosomal subunits. Also involved in the hydrolysis of GTP during the formation of the 70S ribosomal complex. In Prochlorococcus marinus (strain MIT 9211), this protein is Translation initiation factor IF-2.